The following is a 207-amino-acid chain: Tetrathionate reductase subunit B (207 aa).

Positions 1–28 (MLISKTLIFYQVVNIVSQKGSGKRRWKM) are cleaved as a signal peptide. 4Fe-4S ferredoxin-type domains are found at residues 34-63 (YVYV…PVGY), 75-106 (GRVA…KTEE), and 107-136 (GLVL…RNPV). The [4Fe-4S] cluster site is built by C43, C46, C49, C53, C84, C87, C92, C96, C116, C119, C122, C126, C143, C146, C157, and C161.

As to quaternary structure, probably composed of three subunits: TtrA, TtrB and TtrC.

The protein resides in the cell membrane. Its function is as follows. Part of a membrane-bound tetrathionate reductase that catalyzes the reduction of tetrathionate to thiosulfate. TtrB is probably involved in transfer of electrons from TtrC to TtrA. The protein is Tetrathionate reductase subunit B (ttrB) of Archaeoglobus fulgidus (strain ATCC 49558 / DSM 4304 / JCM 9628 / NBRC 100126 / VC-16).